A 121-amino-acid chain; its full sequence is Large ribosomal subunit protein uL22 (121 aa).

The protein belongs to the universal ribosomal protein uL22 family. As to quaternary structure, part of the 50S ribosomal subunit.

Functionally, this protein binds specifically to 23S rRNA; its binding is stimulated by other ribosomal proteins, e.g. L4, L17, and L20. It is important during the early stages of 50S assembly. It makes multiple contacts with different domains of the 23S rRNA in the assembled 50S subunit and ribosome. The globular domain of the protein is located near the polypeptide exit tunnel on the outside of the subunit, while an extended beta-hairpin is found that lines the wall of the exit tunnel in the center of the 70S ribosome. The sequence is that of Large ribosomal subunit protein uL22 from Synechococcus sp. (strain WH7803).